The chain runs to 558 residues: Pyrethroid hydrolase Ces2a (558 aa).

The signal sequence occupies residues 1–26 (MPLARLPGWLCVVACGLLLLLQHVHG). The cysteines at positions 95 and 122 are disulfide-linked. Lys209 bears the N6-succinyllysine mark. Ser227 acts as the Acyl-ester intermediate in catalysis. Residue Asn275 is glycosylated (N-linked (GlcNAc...) asparagine). Residues Cys279 and Cys290 are joined by a disulfide bond. An N6-succinyllysine modification is found at Lys296. Glu344 serves as the catalytic Charge relay system. A glycan (N-linked (GlcNAc...) asparagine) is linked at Asn361. Residue His456 is the Charge relay system of the active site.

This sequence belongs to the type-B carboxylesterase/lipase family.

Its subcellular location is the microsome. It catalyses the reaction (-)-trans-permethrin + H2O = (3-phenoxyphenyl)methanol + (1S,3R)-3-(2,2-dichlorovinyl)-2,2-dimethylcyclopropanecarboxylate + H(+). It carries out the reaction all-trans-retinyl hexadecanoate + H2O = all-trans-retinol + hexadecanoate + H(+). Carboxylesterases that catalyzes the hydrolysis of pyrethroids pesticides. Hydrolyzes permethrin faster than cypermethrin. Hydrolyzes retinyl esters. The sequence is that of Pyrethroid hydrolase Ces2a from Mus musculus (Mouse).